A 106-amino-acid chain; its full sequence is UPF0145 protein APL_0465 (106 aa).

This sequence belongs to the UPF0145 family.

The polypeptide is UPF0145 protein APL_0465 (Actinobacillus pleuropneumoniae serotype 5b (strain L20)).